We begin with the raw amino-acid sequence, 361 residues long: Mitochondrial import receptor subunit TOM40 homolog (361 aa).

Positions 1–73 (MGNVLAASSP…GAAAASEDGS (73 aa)) are disordered. A compositionally biased stretch (pro residues) spans 11-36 (PAGPPPPPTPSLVGLPPPPPSPPGFT). The segment covering 40-50 (LGGGLGTGSST) has biased composition (gly residues). Over residues 51-69 (GRGSERTPGAAASGAAAAS) the composition is skewed to low complexity.

It belongs to the Tom40 family. In terms of assembly, forms part of the preprotein translocase complex of the outer mitochondrial membrane (TOM complex) which consists of at least 7 different proteins (TOMM5, TOMM6, TOMM7, TOMM20, TOMM22, TOMM40 and TOMM70). Interacts with mitochondrial targeting sequences. Interacts with TIMM29; linking the TIM22 complex to the TOM complex. Forms a complex with BCAP31 (via C-terminus) which mediates the translocation of components of the mitochondrial membrane respiratory chain NADH dehydrogenase (Complex I) from the cytosol to the mitochondria. Interacts (via N-terminus) with CYP1A1 (via mitochondrial targeting signal); this interaction is required for CYP1A1 translocation across the mitochondrial outer membrane.

It localises to the mitochondrion outer membrane. Channel-forming protein essential for import of protein precursors into mitochondria. Plays a role in the assembly of the mitochondrial membrane respiratory chain NADH dehydrogenase (Complex I) by forming a complex with BCAP31 and mediating the translocation of Complex I components from the cytosol to the mitochondria. This is Mitochondrial import receptor subunit TOM40 homolog (Tomm40) from Mus musculus (Mouse).